The sequence spans 614 residues: Putative amino acid transporter AAT1 (614 aa).

Transmembrane regions (helical) follow at residues 184–216 (VLFL…LILL), 222–243 (YITT…YGNL), 255–275 (LIDF…LILV), 295–311 (RIFI…PLTF), 318–340 (INCF…GYQS), 360–380 (HFFK…NACF), 401–417 (ILIQ…LGYL), 437–459 (SILL…NFIA), 531–547 (CAAI…EFNV), 553–575 (FIGI…LIYY), and 587–613 (RYAT…FIII).

The protein belongs to the amino acid/polyamine transporter 2 family.

The protein localises to the vacuole membrane. In terms of biological role, putative amino acid transporter. Involved in maintaining the osmotic homeostasis of the digestive vacuole. Important for the timely development and growth of the asexual-stage parasites and male gametocyte maturation. This is Putative amino acid transporter AAT1 from Plasmodium berghei (strain Anka).